Reading from the N-terminus, the 356-residue chain is ADP-ribosylhydrolase ARH3 (356 aa).

Residues aspartate 26, glutamate 33, threonine 62, aspartate 63, and aspartate 64 each coordinate Mg(2+). Position 63 (aspartate 63) interacts with substrate. Substrate is bound by residues 132–138, histidine 168, and isoleucine 260; that span reads KGSYGNG. Mg(2+) is bound by residues aspartate 303, aspartate 305, and threonine 306.

The protein belongs to the ADP-ribosylglycohydrolase family. In terms of assembly, monomer. It depends on Mg(2+) as a cofactor. Mn(2+) is required as a cofactor.

The protein resides in the nucleus. Its subcellular location is the cytoplasm. The protein localises to the chromosome. It is found in the mitochondrion matrix. The catalysed reaction is [(1''-&gt;2')-ADP-alpha-D-ribose](n) + H2O = [(1''-&gt;2')-ADP-alpha-D-ribose](n-1) + ADP-D-ribose. It carries out the reaction 1''-O-acetyl-ADP-alpha-D-ribose + H2O = ADP-D-ribose + acetate + H(+). It catalyses the reaction O-(ADP-D-ribosyl)-L-seryl-[protein] + H2O = ADP-D-ribose + L-seryl-[protein]. The enzyme catalyses alpha-NAD(+) + H2O = ADP-D-ribose + nicotinamide + H(+). With respect to regulation, the protein undergoes a dramatic conformational switch from closed to open states upon substrate-binding, which enables specific substrate recognition for the 1''-O-linkage. The glutamate flap (Glu-33) blocks substrate entrance to Mg(2+) in the unliganded closed state. In presence of substrate, Glu-33 is ejected from the active site: this closed-to-open transition significantly widens the substrate-binding channel and precisely positions the scissile 1''-O-linkage for cleavage while securing tightly 2'- and 3'-hydroxyls of ADP-ribose. Activity is inhibited by calcium. Functionally, ADP-ribosylhydrolase that preferentially hydrolyzes the scissile alpha-O-linkage attached to the anomeric C1'' position of ADP-ribose and acts on different substrates, such as proteins ADP-ribosylated on serine and threonine, free poly(ADP-ribose) and O-acetyl-ADP-D-ribose. Specifically acts as a serine mono-ADP-ribosylhydrolase by mediating the removal of mono-ADP-ribose attached to serine residues on proteins, thereby playing a key role in DNA damage response. Serine ADP-ribosylation of proteins constitutes the primary form of ADP-ribosylation of proteins in response to DNA damage. Does not hydrolyze ADP-ribosyl-arginine, -cysteine, -diphthamide, or -asparagine bonds. Also able to degrade protein free poly(ADP-ribose), which is synthesized in response to DNA damage: free poly(ADP-ribose) acts as a potent cell death signal and its degradation by ADPRHL2 protects cells from poly(ADP-ribose)-dependent cell death, a process named parthanatos. Also hydrolyzes free poly(ADP-ribose) in mitochondria. Specifically digests O-acetyl-ADP-D-ribose, a product of deacetylation reactions catalyzed by sirtuins. Specifically degrades 1''-O-acetyl-ADP-D-ribose isomer, rather than 2''-O-acetyl-ADP-D-ribose or 3''-O-acetyl-ADP-D-ribose isomers. This Latimeria chalumnae (Coelacanth) protein is ADP-ribosylhydrolase ARH3 (adprs).